The chain runs to 580 residues: Arginine--tRNA ligase (580 aa).

Positions 131-141 (ANPTGPMHVGH) match the 'HIGH' region motif.

It belongs to the class-I aminoacyl-tRNA synthetase family. As to quaternary structure, monomer.

The protein resides in the cytoplasm. It carries out the reaction tRNA(Arg) + L-arginine + ATP = L-arginyl-tRNA(Arg) + AMP + diphosphate. This chain is Arginine--tRNA ligase, found in Cereibacter sphaeroides (strain ATCC 17023 / DSM 158 / JCM 6121 / CCUG 31486 / LMG 2827 / NBRC 12203 / NCIMB 8253 / ATH 2.4.1.) (Rhodobacter sphaeroides).